A 569-amino-acid chain; its full sequence is Linoleate hydratase (569 aa).

Tyr87 provides a ligand contact to FAD. The active-site Proton donor is Tyr205. 3 residues coordinate FAD: Val254, Ser300, and Thr524.

The protein belongs to the oleate hydratase family. FAD is required as a cofactor.

It localises to the cell membrane. It is found in the cytoplasm. It catalyses the reaction (9Z,12Z)-octadecadienoate + H2O = (10S)-hydroxy-(12Z)-octadecenoate. It carries out the reaction (10E,12Z)-octadecadienoate + H2O = (10S)-hydroxy-(12Z)-octadecenoate. The catalysed reaction is (9Z)-octadecenoate + H2O = 10-hydroxyoctadecanoate. The enzyme catalyses (10E)-octadecenoate + H2O = 10-hydroxyoctadecanoate. It catalyses the reaction (9E,11E)-octadecadienoate + H2O = 10-hydroxy-(11E)-octadecenoate. It carries out the reaction (9Z,11E)-octadecadienoate + H2O = 10-hydroxy-(11E)-octadecenoate. The catalysed reaction is (9Z)-hexadecenoate + H2O = 10-hydroxyhexadecanoate. The enzyme catalyses (9Z,12Z,15Z)-octadecatrienoate + H2O = (10S)-hydroxy-(12Z,15Z)-octadecadienoate. It catalyses the reaction (6Z,9Z,12Z)-octadecatrienoate + H2O = (10S)-hydroxy-(6Z,12Z)-octadecadienoate. It carries out the reaction (6Z,9Z,12Z,15Z)-octadecatetraenoate + H2O = (10S)-hydroxy-(6Z,12Z,15Z)-octadecatrienoate. Its pathway is lipid metabolism; fatty acid metabolism. The addition of NADH or NADPH highly increases catalytic activity, likely by reducing the cofactor FAD to FADH2. The hydration and dehydration reactions are strongly inhibited by Ag(+), Fe(2+), Cu(2+), Zn(2+), Hg(2+), and Fe(3+). Its function is as follows. Is involved in a saturation metabolic pathway of polyunsaturated fatty acids, that detoxifies unsaturated fatty acids and generates hydroxy fatty acids, oxo fatty acids, conjugated fatty acids such as conjugated linoleic acids (CLAs), and partially saturated trans-fatty acids as intermediates. CLA-HY catalyzes the hydration and dehydration steps in the production of 10-hydroxy-cis-12-octadecenoate, trans-10,cis-12-CLA, cis-9,trans-11-CLA, trans-9,trans-11-CLA, oleate and trans-10-octadecenoate during linoleate metabolism. Is also able to hydrate palmitoleic acid (cis-9-hexadecenoic acid), oleic acid, alpha-linolenic acid, gamma-linolenic acid, and stearidonic acid into the corresponding 10-hydroxy fatty acids, and dehydrate 10-hydroxy-cis-12,cis-15-octadecadienoic acid, 10-hydroxy-cis-6,cis-12-octadecadienoic acid, and 10-hydroxyoctadecanoic acid into the corresponding fatty acids with cis double bonds at the Delta9 position. As part of the gut microbiome, this enzyme modifies host fatty acid composition and is expected to improve human health by altering lipid metabolism related to the onset of metabolic syndrome. Shows regioselectivity for Delta9 double bond hydration, generating C10 hydroxy groups in the (S)-configuration with high enantioselectivity, when another double bond is in position 12. Is not able to hydrate fatty acids with a trans carbon-carbon double bond at Delta9 position (elaidic acid, trans-9-octadecenoic acid), fatty acid esters (methyl linoleate, monolinolein, dilinolein, and trilinolein), and conjugated fatty acids (conjugated linoleic acids), as well as fatty acids with other chain lengths, such as myristoleic acid (cis-9-tetradecenoic acid), arachidonic acid (cis-5,cis-8,cis-11,cis-14-eicosatetraenoic acid), EPA (cis-5,cis-8,cis-11,cis-14,cis-17-eicosapentaenoic acid), DHA (cis-4,cis-7,cis-10,cis-13,cis-16,cis-19-docosahexaenoic acid) and fatty acids with a cis carbon-carbon double bond at Delta11 position, such as cis-vaccenic acid and cis-11-octadecenoic acid, or fatty alcohols, such as linoleyl alcohol. Is not able to dehydrate 12-hydroxy, 3-hydroxy, and 9-hydroxy fatty acids. The chain is Linoleate hydratase from Lactiplantibacillus plantarum (Lactobacillus plantarum).